Here is a 139-residue protein sequence, read N- to C-terminus: Large-conductance mechanosensitive channel (139 aa).

3 consecutive transmembrane segments (helical) span residues 14 to 34 (VVDLAVGVIIGAAFGAIVNSA), 38 to 58 (IFMPVIGAITGGLDFSNYYIP), and 82 to 102 (GQFLTLTLNFAIVAFVLFLVI).

The protein belongs to the MscL family. As to quaternary structure, homopentamer.

It is found in the cell inner membrane. Its function is as follows. Channel that opens in response to stretch forces in the membrane lipid bilayer. May participate in the regulation of osmotic pressure changes within the cell. This is Large-conductance mechanosensitive channel from Methylobacterium radiotolerans (strain ATCC 27329 / DSM 1819 / JCM 2831 / NBRC 15690 / NCIMB 10815 / 0-1).